Consider the following 475-residue polypeptide: UDP-glycosyltransferase 1 (475 aa).

The Proton acceptor role is filled by His-15. His-15 contacts an anthocyanidin. Residue Asp-117 is the Charge relay of the active site. UDP-alpha-D-glucose contacts are provided by Ala-345, Gln-347, His-362, Trp-365, Asn-366, Ser-367, and Glu-370. Gly-385 is an an anthocyanidin binding site. UDP-alpha-D-glucose is bound by residues Glu-386 and Gln-387.

It belongs to the UDP-glycosyltransferase family. In terms of tissue distribution, mostly expressed in leaves and flowers, and, to a lower extent, in roots and stems.

The enzyme catalyses (20S)-protopanaxadiol + UDP-alpha-D-glucose = (20S)-ginsenoside C-K + UDP + H(+). It carries out the reaction (20S)-ginsenoside Rg3 + UDP-alpha-D-glucose = (20S)-ginsenoside Rd + UDP + H(+). The catalysed reaction is (20S)-ginsenoside Rh2 + UDP-alpha-D-glucose = (20S)-ginsenoside F2 + UDP + H(+). It catalyses the reaction (20S)-protopanaxatriol + UDP-alpha-D-glucose = (20S)-ginsenoside F1 + UDP + H(+). The enzyme catalyses dammarenediol-II + UDP-alpha-D-glucose = (20S)-20-O-(beta-D-glucosyl)-3-hydroxydammarene + UDP + H(+). It functions in the pathway secondary metabolite biosynthesis; terpenoid biosynthesis. In terms of biological role, component of the dammarane-type triterpene saponins (e.g. ginsenosides or panaxosides) biosynthetic pathway. Glycosyltransferase that catalyzes the biosynthesis of ginsenoside F1 from protopanaxatriol (PPT). Triggers C20-OH glycosylation of ginsenoside Rg3 to produce ginsenoside Rd. Mediates the conversion of protopanaxadiol (PPD) to the ginsenoside compound K. catalyzes the production of 20S-O-beta-(D-glucosyl)-dammarenediol II form dammarenediol II (DM). The protein is UDP-glycosyltransferase 1 of Panax ginseng (Korean ginseng).